Here is a 975-residue protein sequence, read N- to C-terminus: Probable ATP-dependent RNA helicase CG8611 (975 aa).

Residues 1–24 (MVENISLNVTVKSSARKNQQQSPA) show a composition bias toward polar residues. 3 disordered regions span residues 1-38 (MVENISLNVTVKSSARKNQQQSPALSVKKRAQKSQDFD), 50-104 (AIVV…DDLM), and 127-295 (TTKP…FRTK). Residues 64 to 94 (PTNSSVPNTTKSPTPSVSSSKSAISTLSASP) show a composition bias toward low complexity. Residues Ser75 and Ser99 each carry the phosphoserine modification. Residues 190–203 (QLEEERRQKRREEG) are compositionally biased toward basic and acidic residues. Phosphoserine occurs at positions 210, 220, and 224. Acidic residues predominate over residues 242–261 (IEDSGESGEESATSDEEPDE). Basic and acidic residues predominate over residues 269–285 (QEKEPKQTAKKPPKAEE). Residues 327-356 (SKISTLGLHPHAVKNLEDLLSIRELTSVQQ) carry the Q motif motif. In terms of domain architecture, Helicase ATP-binding spans 359-548 (IPEVLQGKDV…GLTLKNPLYI (190 aa)). 372-379 (SQTGSGKT) contacts ATP. The DEAD box signature appears at 485–488 (DEAD). The Helicase C-terminal domain maps to 616–789 (LLAKEVDASP…DMYAYLQTLL (174 aa)). Residue Ser667 is modified to Phosphoserine. Disordered regions lie at residues 915-942 (LQQRDVGAQKPGAPPPKGGFIGGGVGRS) and 955-975 (NMSEFDSGLPPEGAAKRRKQA).

This sequence belongs to the DEAD box helicase family. DDX31/DBP7 subfamily.

The enzyme catalyses ATP + H2O = ADP + phosphate + H(+). Functionally, probable ATP-dependent RNA helicase. In Drosophila melanogaster (Fruit fly), this protein is Probable ATP-dependent RNA helicase CG8611.